We begin with the raw amino-acid sequence, 298 residues long: MRGLDYKWIEALDAVVYQGSFERAAEHLFVSQSAISQRIKQLEKFLAQPVLIREQPPKPTPIGKKLLGLYRRVRLLEHEILPEIKNDTTTRPVQLSLATNADSLATWLLPALQDVMKTRQVELKLTIYGESRSIEKLKSGEVAGAISLESQAIPNCRADYLGRIDYVCVANPEFYQRYFSEGVNNQTLAKAPAVSYDQYDDLHKKFLTEHFNVRPDSVIHHNISSSEAFLKMALAGVAYCLIPRLQITDELEQGSLIDITPGFLMSYRIYWHHWQLETGVLQEISQAIVNYAQRHLPQ.

An HTH lysR-type domain is found at 4–60; that stretch reads LDYKWIEALDAVVYQGSFERAAEHLFVSQSAISQRIKQLEKFLAQPVLIREQPPKPT. The H-T-H motif DNA-binding region spans 21–40; it reads FERAAEHLFVSQSAISQRIK.

The protein belongs to the LysR transcriptional regulatory family. As to quaternary structure, homodimer.

Controls the transcription of genes involved in arginine and lysine metabolism. This is HTH-type transcriptional regulator ArgP from Vibrio parahaemolyticus serotype O3:K6 (strain RIMD 2210633).